The primary structure comprises 316 residues: Apolipoprotein E (316 aa).

An N-terminal signal peptide occupies residues 1 to 18 (MKALWAVLVVTLLAGCLA). A run of 8 repeats spans residues 76 to 97 (VLMEDTMTELKAYKKELEEQMG), 98 to 119 (PMAEETRARLAKEVQAAQSRLG), 120 to 141 (ADMEDLRNRLGLYRNEVQTMLG), 142 to 163 (QSTEELRARLTTHLRKLRKRLM), 164 to 185 (RDAEDLQKRLAVYKAGAREGAE), 186 to 207 (RGVGAIRERLGPLVEQGRQRTA), 208 to 229 (NLGAGAAQPLRERAQALGARIR), and 230 to 251 (GRLEEVGNQARDRLEEVREQME). The interval 76–251 (VLMEDTMTEL…RLEEVREQME (176 aa)) is 8 X 22 AA approximate tandem repeats. Position 139 is a methionine sulfoxide (Met-139). Ser-143 is subject to Phosphoserine. The segment at 154–164 (HLRKLRKRLMR) is LDL and other lipoprotein receptors binding. 158-161 (LRKR) contributes to the heparin binding site. Positions 206-286 (TANLGAGAAQ…GWFEPLVEDM (81 aa)) are lipid-binding and lipoprotein association. 225-232 (GARIRGRL) provides a ligand contact to heparin. The homooligomerization stretch occupies residues 262–316 (QQMRLQAEIFQTRLKGWFEPLVEDMQRQWANLMEKIQASVATNPIPPSSVPQESQ). Positions 274–286 (RLKGWFEPLVEDM) are specificity for association with VLDL.

Belongs to the apolipoprotein A1/A4/E family. In terms of assembly, homotetramer. May interact with ABCA1; functionally associated with ABCA1 in the biogenesis of HDLs. May interact with APP/A4 amyloid-beta peptide; the interaction is extremely stable in vitro but its physiological significance is unclear. May interact with MAPT. May interact with MAP2. In the cerebrospinal fluid, interacts with secreted SORL1. Interacts with PMEL; this allows the loading of PMEL luminal fragment on ILVs to induce fibril nucleation. APOE exists as multiple glycosylated and sialylated glycoforms within cells and in plasma. The extent of glycosylation and sialylation are tissue and context specific. In terms of processing, glycated in plasma VLDL. Post-translationally, phosphorylated by FAM20C in the extracellular medium.

The protein localises to the secreted. The protein resides in the extracellular space. It is found in the extracellular matrix. Its subcellular location is the extracellular vesicle. It localises to the endosome. The protein localises to the multivesicular body. APOE is an apolipoprotein, a protein associating with lipid particles, that mainly functions in lipoprotein-mediated lipid transport between organs via the plasma and interstitial fluids. APOE is a core component of plasma lipoproteins and is involved in their production, conversion and clearance. Apolipoproteins are amphipathic molecules that interact both with lipids of the lipoprotein particle core and the aqueous environment of the plasma. As such, APOE associates with chylomicrons, chylomicron remnants, very low density lipoproteins (VLDL) and intermediate density lipoproteins (IDL) but shows a preferential binding to high-density lipoproteins (HDL). It also binds a wide range of cellular receptors including the LDL receptor/LDLR, the LDL receptor-related proteins LRP1, LRP2 and LRP8 and the very low-density lipoprotein receptor/VLDLR that mediate the cellular uptake of the APOE-containing lipoprotein particles. Finally, APOE also has a heparin-binding activity and binds heparan-sulfate proteoglycans on the surface of cells, a property that supports the capture and the receptor-mediated uptake of APOE-containing lipoproteins by cells. A main function of APOE is to mediate lipoprotein clearance through the uptake of chylomicrons, VLDLs, and HDLs by hepatocytes. APOE is also involved in the biosynthesis by the liver of VLDLs as well as their uptake by peripheral tissues ensuring the delivery of triglycerides and energy storage in muscle, heart and adipose tissues. By participating in the lipoprotein-mediated distribution of lipids among tissues, APOE plays a critical role in plasma and tissues lipid homeostasis. APOE is also involved in two steps of reverse cholesterol transport, the HDLs-mediated transport of cholesterol from peripheral tissues to the liver, and thereby plays an important role in cholesterol homeostasis. First, it is functionally associated with ABCA1 in the biogenesis of HDLs in tissues. Second, it is enriched in circulating HDLs and mediates their uptake by hepatocytes. APOE also plays an important role in lipid transport in the central nervous system, regulating neuron survival and sprouting. The polypeptide is Apolipoprotein E (APOE) (Microtus ochrogaster (Prairie vole)).